Reading from the N-terminus, the 248-residue chain is 5'-nucleotidase SurE (248 aa).

D8, D9, S39, and N91 together coordinate a divalent metal cation.

The protein belongs to the SurE nucleotidase family. It depends on a divalent metal cation as a cofactor.

The protein localises to the cytoplasm. The catalysed reaction is a ribonucleoside 5'-phosphate + H2O = a ribonucleoside + phosphate. Its function is as follows. Nucleotidase that shows phosphatase activity on nucleoside 5'-monophosphates. In Neisseria meningitidis serogroup C / serotype 2a (strain ATCC 700532 / DSM 15464 / FAM18), this protein is 5'-nucleotidase SurE.